The chain runs to 227 residues: Neuromodulin (227 aa).

The interval 1-227 is disordered; that stretch reads MLCCMRRTKQ…EDPEADQEHA (227 aa). 2 S-palmitoyl cysteine lipidation sites follow: Cys3 and Cys4. Over residues 9 to 32 the composition is skewed to basic and acidic residues; the sequence is KQVEKNDEDQKIEQDGVKPEDKAH. The IQ domain maps to 31–60; it reads AHKAATKIQASFRGHITRKKLKGEKKGDAP. Ser41 is subject to Phosphoserine; by PHK. Residues 54-84 show a composition bias toward basic and acidic residues; it reads EKKGDAPAAEAEAKEKDDAPVADGVEKKEGD. A compositionally biased stretch (low complexity) spans 85–97; the sequence is GSATTDAAPATSP. Phosphoserine occurs at positions 86 and 96. The segment covering 98–127 has biased composition (basic and acidic residues); the sequence is KAEEPSKAGDAPSEEKKGEGDAAPSEEKAG. The segment covering 128-139 has biased composition (low complexity); the sequence is SAETESAAKATT. Residue Thr138 is modified to Phosphothreonine. Ser142, Ser144, and Ser145 each carry phosphoserine. Positions 146–158 are enriched in basic and acidic residues; sequence KAEDGPAKEEPKQ. The span at 159–193 shows a compositional bias: low complexity; sequence ADVPAAVTDAAATTPAAEDAATKAAQPPTETAESS. Thr172 carries the phosphothreonine modification. A phosphoserine; by CK2 mark is found at Ser192 and Ser193. The span at 202-215 shows a compositional bias: basic and acidic residues; it reads VDEAKPKESARQDE. Positions 216-227 are enriched in acidic residues; it reads GKEDPEADQEHA.

It belongs to the neuromodulin family. Identified in a complex containing FGFR4, NCAM1, CDH2, PLCG1, FRS2, SRC, SHC1, GAP43 and CTTN. Interacts (via IQ domain) with calmodulin. Binds calmodulin with a greater affinity in the absence of Ca(2+) than in its presence. Post-translationally, phosphorylated. Phosphorylation of this protein by a protein kinase C is specifically correlated with certain forms of synaptic plasticity. In terms of processing, palmitoylated by ZDHHC3. Palmitoylation is regulated by ARF6 and is essential for plasma membrane association and axonal and dendritic filopodia induction. Deacylated by LYPLA2. In terms of tissue distribution, expressed in the hippocampus (at protein level). Expressed in the dorsal root ganglion and the spinal cord (at protein level).

It is found in the cell membrane. Its subcellular location is the cell projection. It localises to the growth cone membrane. The protein resides in the synapse. The protein localises to the filopodium membrane. It is found in the perikaryon. Its subcellular location is the dendrite. It localises to the axon. The protein resides in the cytoplasm. In terms of biological role, this protein is associated with nerve growth. It is a major component of the motile 'growth cones' that form the tips of elongating axons. Plays a role in axonal and dendritic filopodia induction. The sequence is that of Neuromodulin (Gap43) from Mus musculus (Mouse).